Consider the following 160-residue polypeptide: UPF0178 protein PA5247 (160 aa).

It belongs to the UPF0178 family.

This is UPF0178 protein PA5247 from Pseudomonas aeruginosa (strain ATCC 15692 / DSM 22644 / CIP 104116 / JCM 14847 / LMG 12228 / 1C / PRS 101 / PAO1).